The chain runs to 457 residues: ATP synthase subunit beta (457 aa).

ATP is bound at residue 147–154; sequence GGAGVGKT.

This sequence belongs to the ATPase alpha/beta chains family. F-type ATPases have 2 components, CF(1) - the catalytic core - and CF(0) - the membrane proton channel. CF(1) has five subunits: alpha(3), beta(3), gamma(1), delta(1), epsilon(1). CF(0) has three main subunits: a(1), b(2) and c(9-12). The alpha and beta chains form an alternating ring which encloses part of the gamma chain. CF(1) is attached to CF(0) by a central stalk formed by the gamma and epsilon chains, while a peripheral stalk is formed by the delta and b chains.

Its subcellular location is the cell inner membrane. It carries out the reaction ATP + H2O + 4 H(+)(in) = ADP + phosphate + 5 H(+)(out). Its function is as follows. Produces ATP from ADP in the presence of a proton gradient across the membrane. The catalytic sites are hosted primarily by the beta subunits. The chain is ATP synthase subunit beta from Pasteurella multocida (strain Pm70).